The sequence spans 185 residues: Large ribosomal subunit protein bL25 (185 aa).

The protein belongs to the bacterial ribosomal protein bL25 family. CTC subfamily. As to quaternary structure, part of the 50S ribosomal subunit; part of the 5S rRNA/L5/L18/L25 subcomplex. Contacts the 5S rRNA. Binds to the 5S rRNA independently of L5 and L18.

Its function is as follows. This is one of the proteins that binds to the 5S RNA in the ribosome where it forms part of the central protuberance. This is Large ribosomal subunit protein bL25 from Chlamydia trachomatis serovar L2 (strain ATCC VR-902B / DSM 19102 / 434/Bu).